The sequence spans 199 residues: Probable GTP-binding protein EngB (199 aa).

One can recognise an EngB-type G domain in the interval 21–196 (TKPEYAFIGR…LTYIDEINKQ (176 aa)). GTP is bound by residues 29–36 (GRSNVGKS), 56–60 (GKTQL), 74–77 (DLPG), 141–144 (TKID), and 175–177 (TSS). Residues S36 and T58 each coordinate Mg(2+).

This sequence belongs to the TRAFAC class TrmE-Era-EngA-EngB-Septin-like GTPase superfamily. EngB GTPase family. The cofactor is Mg(2+).

In terms of biological role, necessary for normal cell division and for the maintenance of normal septation. The protein is Probable GTP-binding protein EngB of Cytophaga hutchinsonii (strain ATCC 33406 / DSM 1761 / CIP 103989 / NBRC 15051 / NCIMB 9469 / D465).